Consider the following 22-residue polypeptide: uncharacterized protein (22 aa).

The protein belongs to the asfivirus C84L family.

This is an uncharacterized protein from Ornithodoros (relapsing fever ticks).